The following is a 107-amino-acid chain: Subtilisin inhibitor-like protein 3 (107 aa).

2 disulfide bridges follow: Cys-29-Cys-44 and Cys-65-Cys-95.

Belongs to the protease inhibitor I16 (SSI) family. Homodimer.

The protein resides in the secreted. Functionally, inhibitor of subtilisin BPN' and trypsin. The protein is Subtilisin inhibitor-like protein 3 of Streptomyces coelicolor.